An 89-amino-acid chain; its full sequence is Small ribosomal subunit protein uS15 (89 aa).

Positions Met1 to Thr22 are disordered.

This sequence belongs to the universal ribosomal protein uS15 family. Part of the 30S ribosomal subunit. Forms a bridge to the 50S subunit in the 70S ribosome, contacting the 23S rRNA.

One of the primary rRNA binding proteins, it binds directly to 16S rRNA where it helps nucleate assembly of the platform of the 30S subunit by binding and bridging several RNA helices of the 16S rRNA. In terms of biological role, forms an intersubunit bridge (bridge B4) with the 23S rRNA of the 50S subunit in the ribosome. This Natranaerobius thermophilus (strain ATCC BAA-1301 / DSM 18059 / JW/NM-WN-LF) protein is Small ribosomal subunit protein uS15.